Consider the following 144-residue polypeptide: Transcriptional regulator MraZ (144 aa).

SpoVT-AbrB domains lie at 5–47 (TYTP…PRAE) and 77–120 (TDEQ…DAQA).

The protein belongs to the MraZ family. In terms of assembly, forms oligomers.

Its subcellular location is the cytoplasm. The protein resides in the nucleoid. The protein is Transcriptional regulator MraZ of Mycolicibacterium vanbaalenii (strain DSM 7251 / JCM 13017 / BCRC 16820 / KCTC 9966 / NRRL B-24157 / PYR-1) (Mycobacterium vanbaalenii).